A 210-amino-acid chain; its full sequence is Ras-related protein RABC2a (210 aa).

20–27 (GDSGVGKS) contacts GTP. An Effector region motif is present at residues 41 to 49 (LAPTIGVDF). GTP contacts are provided by residues 67–71 (DTAGQ), 127–130 (NKVD), and 157–158 (SA). Residues Cys208 and Cys209 are each lipidated (S-geranylgeranyl cysteine).

Belongs to the small GTPase superfamily. Rab family. Interacts with XI-2/MYA2.

The protein localises to the cell membrane. It is found in the cytoplasm. Intracellular vesicle trafficking and protein transport. In Arabidopsis thaliana (Mouse-ear cress), this protein is Ras-related protein RABC2a (RABC2A).